The primary structure comprises 305 residues: Homoserine O-acetyltransferase (305 aa).

Cys-142 (acyl-thioester intermediate) is an active-site residue. Residues Lys-163 and Ser-192 each coordinate substrate. The Proton acceptor role is filled by His-235. Residue Glu-237 is part of the active site. Arg-249 is a binding site for substrate.

Belongs to the MetA family.

The protein resides in the cytoplasm. It catalyses the reaction L-homoserine + acetyl-CoA = O-acetyl-L-homoserine + CoA. It functions in the pathway amino-acid biosynthesis; L-methionine biosynthesis via de novo pathway; O-acetyl-L-homoserine from L-homoserine: step 1/1. In terms of biological role, transfers an acetyl group from acetyl-CoA to L-homoserine, forming acetyl-L-homoserine. The protein is Homoserine O-acetyltransferase of Acetivibrio thermocellus (strain ATCC 27405 / DSM 1237 / JCM 9322 / NBRC 103400 / NCIMB 10682 / NRRL B-4536 / VPI 7372) (Clostridium thermocellum).